Reading from the N-terminus, the 298-residue chain is Acetylglutamate kinase (298 aa).

Substrate is bound by residues 73–74 (GG), R95, and N188.

This sequence belongs to the acetylglutamate kinase family. ArgB subfamily.

The protein resides in the cytoplasm. The catalysed reaction is N-acetyl-L-glutamate + ATP = N-acetyl-L-glutamyl 5-phosphate + ADP. Its pathway is amino-acid biosynthesis; L-arginine biosynthesis; N(2)-acetyl-L-ornithine from L-glutamate: step 2/4. Catalyzes the ATP-dependent phosphorylation of N-acetyl-L-glutamate. The protein is Acetylglutamate kinase of Nostoc punctiforme (strain ATCC 29133 / PCC 73102).